The chain runs to 204 residues: Urease accessory protein UreG (204 aa).

Gly12 to Thr19 lines the GTP pocket.

This sequence belongs to the SIMIBI class G3E GTPase family. UreG subfamily. As to quaternary structure, homodimer. UreD, UreF and UreG form a complex that acts as a GTP-hydrolysis-dependent molecular chaperone, activating the urease apoprotein by helping to assemble the nickel containing metallocenter of UreC. The UreE protein probably delivers the nickel.

It localises to the cytoplasm. Its function is as follows. Facilitates the functional incorporation of the urease nickel metallocenter. This process requires GTP hydrolysis, probably effectuated by UreG. The polypeptide is Urease accessory protein UreG (Stutzerimonas stutzeri (strain A1501) (Pseudomonas stutzeri)).